The primary structure comprises 103 residues: Large ribosomal subunit protein bL21 (103 aa).

This sequence belongs to the bacterial ribosomal protein bL21 family. In terms of assembly, part of the 50S ribosomal subunit. Contacts protein L20.

Its function is as follows. This protein binds to 23S rRNA in the presence of protein L20. The protein is Large ribosomal subunit protein bL21 of Shewanella loihica (strain ATCC BAA-1088 / PV-4).